The following is a 365-amino-acid chain: tRNA/tmRNA (uracil-C(5))-methyltransferase (365 aa).

The S-adenosyl-L-methionine site is built by Gln-189, Tyr-217, Asn-222, Glu-238, and Asp-298. Cys-323 (nucleophile) is an active-site residue. The active-site Proton acceptor is Glu-357.

It belongs to the class I-like SAM-binding methyltransferase superfamily. RNA M5U methyltransferase family. TrmA subfamily.

The catalysed reaction is uridine(54) in tRNA + S-adenosyl-L-methionine = 5-methyluridine(54) in tRNA + S-adenosyl-L-homocysteine + H(+). It catalyses the reaction uridine(341) in tmRNA + S-adenosyl-L-methionine = 5-methyluridine(341) in tmRNA + S-adenosyl-L-homocysteine + H(+). Functionally, dual-specificity methyltransferase that catalyzes the formation of 5-methyluridine at position 54 (m5U54) in all tRNAs, and that of position 341 (m5U341) in tmRNA (transfer-mRNA). The protein is tRNA/tmRNA (uracil-C(5))-methyltransferase of Proteus mirabilis (strain HI4320).